A 433-amino-acid chain; its full sequence is Glutamate-1-semialdehyde 2,1-aminomutase (433 aa).

Lysine 272 carries the post-translational modification N6-(pyridoxal phosphate)lysine.

This sequence belongs to the class-III pyridoxal-phosphate-dependent aminotransferase family. HemL subfamily. As to quaternary structure, homodimer. Pyridoxal 5'-phosphate is required as a cofactor.

It is found in the cytoplasm. The catalysed reaction is (S)-4-amino-5-oxopentanoate = 5-aminolevulinate. It participates in porphyrin-containing compound metabolism; protoporphyrin-IX biosynthesis; 5-aminolevulinate from L-glutamyl-tRNA(Glu): step 2/2. The sequence is that of Glutamate-1-semialdehyde 2,1-aminomutase from Magnetococcus marinus (strain ATCC BAA-1437 / JCM 17883 / MC-1).